The sequence spans 199 residues: Thioredoxin peroxidase (199 aa).

Positions 6–165 (AKLNHPAPHF…TLRLVKAFQF (160 aa)) constitute a Thioredoxin domain. Cys-52 (cysteine sulfenic acid (-SOH) intermediate) is an active-site residue. A disordered region spans residues 179 to 199 (PGSKTMKADPNGSQDYFSSMN). A compositionally biased stretch (polar residues) spans 189-199 (NGSQDYFSSMN).

The protein belongs to the peroxiredoxin family. AhpC/Prx1 subfamily. In terms of assembly, homodimer; disulfide-linked, upon oxidation.

The catalysed reaction is a hydroperoxide + [thioredoxin]-dithiol = an alcohol + [thioredoxin]-disulfide + H2O. Thiol-specific peroxidase that catalyzes the reduction of hydrogen peroxide and organic hydroperoxides to water and alcohols, respectively. Plays a role in cell protection against oxidative stress by detoxifying peroxides and as sensor of hydrogen peroxide-mediated signaling events. This chain is Thioredoxin peroxidase, found in Trypanosoma brucei rhodesiense.